A 359-amino-acid polypeptide reads, in one-letter code: Peptide chain release factor 1 (359 aa).

N5-methylglutamine is present on Q236.

It belongs to the prokaryotic/mitochondrial release factor family. Methylated by PrmC. Methylation increases the termination efficiency of RF1.

It localises to the cytoplasm. In terms of biological role, peptide chain release factor 1 directs the termination of translation in response to the peptide chain termination codons UAG and UAA. This is Peptide chain release factor 1 from Streptococcus pyogenes serotype M18 (strain MGAS8232).